We begin with the raw amino-acid sequence, 732 residues long: Probable ATP-dependent RNA helicase DHX35 homolog (732 aa).

A disordered region spans residues 1-50; sequence MSYHPGHGHRQEPRKGAGARRGFARPDDSADAPRTGPLIFEERSTENAGA. The Helicase ATP-binding domain occupies 87-251; it reads LYMCERYRTI…FEMNETGNSD (165 aa). ATP is bound at residue 100 to 107; that stretch reads GETGCGKS. The DEAH box signature appears at 198–201; that stretch reads DEAH. A Helicase C-terminal domain is found at 283-457; it reads AVDTVINIHK…STILQLKALG (175 aa).

Belongs to the DEAD box helicase family. DEAH subfamily.

It catalyses the reaction ATP + H2O = ADP + phosphate + H(+). The sequence is that of Probable ATP-dependent RNA helicase DHX35 homolog from Caenorhabditis elegans.